The following is a 380-amino-acid chain: Cytochrome b (380 aa).

Transmembrane regions (helical) follow at residues 34–54, 78–99, 114–134, and 179–199; these read FGSL…LLAA, WLIR…YMHV, WNTG…GYVL, and FFTL…IHLT. Positions 84 and 98 each coordinate heme b. H183 and H197 together coordinate heme b. H202 serves as a coordination point for a ubiquinone. The next 4 membrane-spanning stretches (helical) occupy residues 227–247, 289–309, 321–341, and 348–368; these read LKDI…ALFS, LGGV…PLLH, LSQL…WVGS, and FMII…ILFP.

Belongs to the cytochrome b family. In terms of assembly, the cytochrome bc1 complex contains 11 subunits: 3 respiratory subunits (MT-CYB, CYC1 and UQCRFS1), 2 core proteins (UQCRC1 and UQCRC2) and 6 low-molecular weight proteins (UQCRH/QCR6, UQCRB/QCR7, UQCRQ/QCR8, UQCR10/QCR9, UQCR11/QCR10 and a cleavage product of UQCRFS1). This cytochrome bc1 complex then forms a dimer. Heme b is required as a cofactor.

It localises to the mitochondrion inner membrane. Component of the ubiquinol-cytochrome c reductase complex (complex III or cytochrome b-c1 complex) that is part of the mitochondrial respiratory chain. The b-c1 complex mediates electron transfer from ubiquinol to cytochrome c. Contributes to the generation of a proton gradient across the mitochondrial membrane that is then used for ATP synthesis. The sequence is that of Cytochrome b (MT-CYB) from Balearica pavonina (Black crowned-crane).